Consider the following 392-residue polypeptide: Serpin B11 (392 aa).

An RCL region spans residues 341-365 (EEGTEAAAATGDSIAVKSLPMRAQF).

Belongs to the serpin family. Ov-serpin subfamily. As to expression, detected in a restricted number of tissues, including lung, placenta, prostate, and tonsil.

It localises to the cytoplasm. Functionally, has no serine protease inhibitory activity, probably due to variants in the scaffold impairing conformational change. This Homo sapiens (Human) protein is Serpin B11 (SERPINB11).